We begin with the raw amino-acid sequence, 132 residues long: MVEAFCATWKLTESQNFDEYMKALGVGFATRQVGNVTKPTVIISQEGDRVVIRTQSTFKNTEISFHLGEEFDETTADDRNCKSVVSLDGDKLVHVQKWDGKETNFVREIKDGKMIMTLTFGDVVAVRHYEKA.

At Val2 the chain carries N-acetylvaline. 127–129 contributes to the a fatty acid binding site; the sequence is RHY.

This sequence belongs to the calycin superfamily. Fatty-acid binding protein (FABP) family. As to quaternary structure, monomer.

The protein localises to the cytoplasm. Its function is as follows. FABPs are thought to play a role in the intracellular transport of long-chain fatty acids and their acyl-CoA esters. Binds oleic and palmitic acids but not palmitoyl CoA. This Bos taurus (Bovine) protein is Fatty acid-binding protein, brain (FABP7).